A 420-amino-acid polypeptide reads, in one-letter code: Transcription factor TCP4 (420 aa).

The disordered stretch occupies residues methionine 1–glycine 27. Residues arginine 45–leucine 103 form the TCP domain. Disordered stretches follow at residues asparagine 121–aspartate 176, leucine 228–proline 256, histidine 353–isoleucine 379, and glutamine 399–histidine 420. Residues lysine 410 to histidine 420 are compositionally biased toward polar residues.

As to quaternary structure, interacts with AHL27 and AHL29. Interacts with SPL. Interacts with JGB. Interacts with GI (via N-terminus). Expressed in cotyledons, particularly in the vascular region, in leaves, roots, buds, flowers and immature siliques.

Its subcellular location is the nucleus. In terms of biological role, transcription factor playing a pivotal role in the control of morphogenesis of shoot organs by negatively regulating the expression of boundary-specific genes such as CUC genes, probably through the induction of miRNA (e.g. miR164). Required during early steps of embryogenesis. Participates in ovule development. Activates LOX2 expression by binding to the 5'-GGACCA-3' motif found in its promoter. Activates YUC5 transcription by binding to the 5'-GTGGGCCA-3' motif found in its promoter. Through the activation of YUC5 transcription, integrates the auxin response to a brassinosteroid-dependent molecular circuit that promotes cell elongation in hypocotyls. Activates GIS transcription by binding to the 5'-TGGTCC-3' motif found in its promoter. Involved in the regulation of trichome branching through the activation of GIS transcription. Activates CO transcription by binding to the 5'-GGACCAC-3' motif found in its promoter. Involved in the regulation of photoperiodic flowering through the activation of CO transcription. Activates TCL1 and TCL2 transcription by binding to the 5'-TGGCCA-3' and 5'-GTGGACCA-3' motifS found in their respective promoters. Involved in the suppression of trichome initiaition through the activation of TCL1 and TCL2 transcription. Activates HAT2 transcription by binding to the 5'-TGGTCCAC-3' motif found in its promoter. Through the activation of HAT2 transcription, involved in the auxin-independent reprogramming of mitotic cells to exit division and acquire differentiation competence within the transition zone. This is Transcription factor TCP4 (TCP4) from Arabidopsis thaliana (Mouse-ear cress).